We begin with the raw amino-acid sequence, 336 residues long: Inositol 2-dehydrogenase (336 aa).

It belongs to the Gfo/Idh/MocA family. Homotetramer.

The catalysed reaction is myo-inositol + NAD(+) = scyllo-inosose + NADH + H(+). Involved in the oxidation of myo-inositol (MI) to 2-keto-myo-inositol (2KMI or 2-inosose). The protein is Inositol 2-dehydrogenase of Pseudomonas fluorescens (strain ATCC BAA-477 / NRRL B-23932 / Pf-5).